The following is a 76-amino-acid chain: Sec-independent protein translocase protein TatA (76 aa).

A helical membrane pass occupies residues 1–21 (MGSFSIWHWLIVLVIVMLIFG). The disordered stretch occupies residues 47-76 (NADKPAEEAQPTQQVGGHTIDVEVKEKTKS). A compositionally biased stretch (basic and acidic residues) spans 66-76 (IDVEVKEKTKS).

Belongs to the TatA/E family. In terms of assembly, the Tat system comprises two distinct complexes: a TatABC complex, containing multiple copies of TatA, TatB and TatC subunits, and a separate TatA complex, containing only TatA subunits. Substrates initially bind to the TatABC complex, which probably triggers association of the separate TatA complex to form the active translocon.

The protein resides in the cell inner membrane. In terms of biological role, part of the twin-arginine translocation (Tat) system that transports large folded proteins containing a characteristic twin-arginine motif in their signal peptide across membranes. TatA could form the protein-conducting channel of the Tat system. This Dechloromonas aromatica (strain RCB) protein is Sec-independent protein translocase protein TatA.